The chain runs to 222 residues: S-crystallin SL20-1 (222 aa).

A GST N-terminal domain is found at 2–80; the sequence is PNYTLYYFNG…YLARENGYYG (79 aa). The GST C-terminal domain maps to 82–222; the sequence is NNMDMFRIDY…YLKKRNNTNW (141 aa).

This sequence belongs to the GST superfamily. Lens.

Functionally, S-crystallins are structural components of squids and octopi eye lens. Contains relatively little if any GST activity. This Nototodarus sloanii (Wellington flying squid) protein is S-crystallin SL20-1.